The following is a 211-amino-acid chain: Somatotropin (211 aa).

The first 23 residues, 1-23, serve as a signal peptide directing secretion; that stretch reads MASGFLLCPVLLAVFFMSPVEVG. Residue histidine 40 participates in Zn(2+) binding. A disulfide bond links cysteine 73 and cysteine 184. Glutamate 193 is a binding site for Zn(2+). A disulfide bridge connects residues cysteine 201 and cysteine 209.

The protein belongs to the somatotropin/prolactin family.

Its subcellular location is the secreted. In terms of biological role, growth hormone plays an important role in growth control and is involved in the regulation of several anabolic processes. Implicated as an osmoregulatory substance important for seawater adaptation. The chain is Somatotropin (gh) from Lepisosteus osseus (Long-nosed gar).